The primary structure comprises 398 residues: S-adenosylmethionine synthase (398 aa).

136-141 (GTGSSD) contributes to the ATP binding site.

It belongs to the AdoMet synthase 2 family. Mg(2+) is required as a cofactor.

The catalysed reaction is L-methionine + ATP + H2O = S-adenosyl-L-methionine + phosphate + diphosphate. It participates in amino-acid biosynthesis; S-adenosyl-L-methionine biosynthesis; S-adenosyl-L-methionine from L-methionine: step 1/1. Its function is as follows. Catalyzes the formation of S-adenosylmethionine from methionine and ATP. The polypeptide is S-adenosylmethionine synthase (Methanosarcina acetivorans (strain ATCC 35395 / DSM 2834 / JCM 12185 / C2A)).